Consider the following 234-residue polypeptide: Phosphoribosylaminoimidazole-succinocarboxamide synthase (234 aa).

This sequence belongs to the SAICAR synthetase family.

It carries out the reaction 5-amino-1-(5-phospho-D-ribosyl)imidazole-4-carboxylate + L-aspartate + ATP = (2S)-2-[5-amino-1-(5-phospho-beta-D-ribosyl)imidazole-4-carboxamido]succinate + ADP + phosphate + 2 H(+). It functions in the pathway purine metabolism; IMP biosynthesis via de novo pathway; 5-amino-1-(5-phospho-D-ribosyl)imidazole-4-carboxamide from 5-amino-1-(5-phospho-D-ribosyl)imidazole-4-carboxylate: step 1/2. The polypeptide is Phosphoribosylaminoimidazole-succinocarboxamide synthase (Streptococcus agalactiae serotype III (strain NEM316)).